Reading from the N-terminus, the 524-residue chain is L-tyrosine:2-oxoglutarate aminotransferase atrD (524 aa).

It belongs to the class-I pyridoxal-phosphate-dependent aminotransferase family. Pyridoxal 5'-phosphate serves as cofactor.

The catalysed reaction is L-tyrosine + 2-oxoglutarate = 3-(4-hydroxyphenyl)pyruvate + L-glutamate. It participates in secondary metabolite biosynthesis. Functionally, the L-tyrosine:2-oxoglutarate aminotransferase atrD and the atromentin synthetase atrA catalyze consecutive steps to turn over L-tyrosine into atromentin, which represents the generic precursor molecule for the entire terphenylquinone and pulvinic acid family of pigments, which are widely distributed secondary metabolites in homobasidiomycetes. The first step is catalyzed by atrD which converts L-tyrosine in to 4-hydroxyphenylpyruvate (4-HPP). Adenylation of two 4-HPP monomers by the atrA adenylation (A) domain, ester bond formation between monomers and atrA, and symmetric C-C-bond formation between two monomers by atrA leads to atromentin. This is L-tyrosine:2-oxoglutarate aminotransferase atrD from Tapinella panuoides (Oyster rollrim mushroom).